The chain runs to 303 residues: Nucleotide-binding protein USA300HOU_0794 (303 aa).

An ATP-binding site is contributed by 18-25 (GLSGAGKS). Residue 69–72 (DLRG) participates in GTP binding.

It belongs to the RapZ-like family.

Its function is as follows. Displays ATPase and GTPase activities. The protein is Nucleotide-binding protein USA300HOU_0794 of Staphylococcus aureus (strain USA300 / TCH1516).